Consider the following 124-residue polypeptide: Small ribosomal subunit protein eS25 (124 aa).

A compositionally biased stretch (basic and acidic residues) spans 1-22; the sequence is MPPKDSKQKKDTSKAKKDKDPV. The disordered stretch occupies residues 1–37; sequence MPPKDSKQKKDTSKAKKDKDPVNKSGGKAKKKKWSKG. Residues 27–37 show a composition bias toward basic residues; the sequence is GKAKKKKWSKG.

It belongs to the eukaryotic ribosomal protein eS25 family. As to quaternary structure, component of the small ribosomal subunit.

Its subcellular location is the cytoplasm. Its function is as follows. Component of the small ribosomal subunit. The ribosome is a large ribonucleoprotein complex responsible for the synthesis of proteins in the cell. This is Small ribosomal subunit protein eS25 (rps25) from Ictalurus punctatus (Channel catfish).